A 61-amino-acid chain; its full sequence is uncharacterized protein (61 aa).

A disordered region spans residues 36-61; sequence RLTDVPPQPNSPPDNVFNPDQPRMGP.

It belongs to the ART2/RRT15 family.

This is an uncharacterized protein from Saccharomyces cerevisiae (strain ATCC 204508 / S288c) (Baker's yeast).